The primary structure comprises 196 residues: Peptidyl-tRNA hydrolase (196 aa).

Y17 provides a ligand contact to tRNA. H22 (proton acceptor) is an active-site residue. Y69, N71, and N117 together coordinate tRNA.

Belongs to the PTH family. Monomer.

It localises to the cytoplasm. It carries out the reaction an N-acyl-L-alpha-aminoacyl-tRNA + H2O = an N-acyl-L-amino acid + a tRNA + H(+). In terms of biological role, hydrolyzes ribosome-free peptidyl-tRNAs (with 1 or more amino acids incorporated), which drop off the ribosome during protein synthesis, or as a result of ribosome stalling. Functionally, catalyzes the release of premature peptidyl moieties from peptidyl-tRNA molecules trapped in stalled 50S ribosomal subunits, and thus maintains levels of free tRNAs and 50S ribosomes. This is Peptidyl-tRNA hydrolase from Pseudarthrobacter chlorophenolicus (strain ATCC 700700 / DSM 12829 / CIP 107037 / JCM 12360 / KCTC 9906 / NCIMB 13794 / A6) (Arthrobacter chlorophenolicus).